A 196-amino-acid chain; its full sequence is Beta-crystallin A4 (196 aa).

An N-acetylthreonine modification is found at Thr-2. The segment at 2–11 is N-terminal arm; that stretch reads TLQCTKSAGH. Beta/gamma crystallin 'Greek key' domains are found at residues 12–51 and 52–98; these read WRVV…KVLS and GAWV…RPVA. Residues 99-104 form a connecting peptide region; that stretch reads CANHRD. Beta/gamma crystallin 'Greek key' domains are found at residues 105-146 and 147-195; these read SRLT…HVQS and GAWV…RRIQ.

Homo/heterodimer, or complexes of higher-order. The structure of beta-crystallin oligomers seems to be stabilized through interactions between the N-terminal arms.

In terms of biological role, crystallins are the dominant structural components of the vertebrate eye lens. This chain is Beta-crystallin A4 (Cryba4), found in Rattus norvegicus (Rat).